A 372-amino-acid polypeptide reads, in one-letter code: Queuine tRNA-ribosyltransferase (372 aa).

The active-site Proton acceptor is aspartate 92. Substrate-binding positions include 92 to 96 (DSGGY), aspartate 146, glutamine 188, and glycine 215. The tract at residues 246–252 (GIGSLRE) is RNA binding. The active-site Nucleophile is aspartate 265. The tract at residues 270–274 (TRLGR) is RNA binding; important for wobble base 34 recognition. Zn(2+) contacts are provided by cysteine 303, cysteine 305, cysteine 308, and histidine 334.

Belongs to the queuine tRNA-ribosyltransferase family. As to quaternary structure, homodimer. Within each dimer, one monomer is responsible for RNA recognition and catalysis, while the other monomer binds to the replacement base PreQ1. Zn(2+) is required as a cofactor.

It carries out the reaction 7-aminomethyl-7-carbaguanine + guanosine(34) in tRNA = 7-aminomethyl-7-carbaguanosine(34) in tRNA + guanine. It participates in tRNA modification; tRNA-queuosine biosynthesis. In terms of biological role, catalyzes the base-exchange of a guanine (G) residue with the queuine precursor 7-aminomethyl-7-deazaguanine (PreQ1) at position 34 (anticodon wobble position) in tRNAs with GU(N) anticodons (tRNA-Asp, -Asn, -His and -Tyr). Catalysis occurs through a double-displacement mechanism. The nucleophile active site attacks the C1' of nucleotide 34 to detach the guanine base from the RNA, forming a covalent enzyme-RNA intermediate. The proton acceptor active site deprotonates the incoming PreQ1, allowing a nucleophilic attack on the C1' of the ribose to form the product. After dissociation, two additional enzymatic reactions on the tRNA convert PreQ1 to queuine (Q), resulting in the hypermodified nucleoside queuosine (7-(((4,5-cis-dihydroxy-2-cyclopenten-1-yl)amino)methyl)-7-deazaguanosine). The sequence is that of Queuine tRNA-ribosyltransferase from Prochlorococcus marinus (strain MIT 9312).